Reading from the N-terminus, the 204-residue chain is Oxidoreductase iacF (204 aa).

The protein belongs to the oxidoreductase OpS7 family.

Its pathway is secondary metabolite biosynthesis. Oxidoreductase; part of the gene cluster that mediates the biosynthesis of iso-A82775C, a enylepoxycyclohexane and biosynthetic precursor of the chloropestolide anticancer natural products. Within the cluster, the prenyltransferase iacE prenylates siccayne to generate pestalodiol E, using dimethylallyl diphosphate (DMAPP) as cosubstrate. The probable oxidoreductase iacF is then involved in the epoxidation of pestalodiol F to pestalodiol F, which is further converted to pestalofone A by the short-chain dehydrogenase/reductase iacG. Iso-A82775C is subsequently generated from pestalofone A by the short-chain dehydrogenase/reductase iacC. Iso-A82775C is further condensed with maldoxin via a Diels-Alder reaction to produce the anticancer natural products chloropestolides A to E. The polypeptide is Oxidoreductase iacF (Pestalotiopsis fici (strain W106-1 / CGMCC3.15140)).